The following is a 909-amino-acid chain: E3 ubiquitin-protein ligase HACE1 (909 aa).

The interval 1–21 (MERAMEQLNRLTRSLRRARTV) is N-terminal helix important for homodimerization. 7 ANK repeats span residues 23–55 (LPDD…NSKF), 64–93 (VKRS…NPNY), 97–126 (SGCT…DVNI), 130–159 (EGLT…DVDV), 163–192 (MGQT…DINR), 196–226 (SGAT…YLSD), and 228–253 (NGVT…QYHP). Residues 396–433 (KGQDQDGTSIPPFEPPGPGSYENLSTGTGESKPDVLGG) form a disordered region. The HECT domain occupies 574–909 (NCAKLKQGIA…HCGSYGYTMA (336 aa)). C876 (glycyl thioester intermediate) is an active-site residue.

In terms of assembly, homodimer. The homodimer is autoinhibited and stabilized by its N-terminal helix. Interacts with RAB1 (RAB1A, RAB1B or RAB1C), RAB4 (RAB4A or RAB4B) and RAB11 (RAB11A or RAB11B); in a GTP-dependent manner. Interacts with the 26S proteasomal complex through the 20S core proteasomal subunit. Interacts with RARB. Autoubiquitinated.

The protein localises to the golgi apparatus. It is found in the golgi stack membrane. The protein resides in the cytoplasm. It localises to the endoplasmic reticulum. It catalyses the reaction S-ubiquitinyl-[E2 ubiquitin-conjugating enzyme]-L-cysteine + [acceptor protein]-L-lysine = [E2 ubiquitin-conjugating enzyme]-L-cysteine + N(6)-ubiquitinyl-[acceptor protein]-L-lysine.. It participates in protein modification; protein ubiquitination. Functionally, E3 ubiquitin-protein ligase involved in Golgi membrane fusion and regulation of small GTPases. Acts as a regulator of Golgi membrane dynamics during the cell cycle: recruited to Golgi membrane by Rab proteins and regulates postmitotic Golgi membrane fusion. Acts by mediating ubiquitination during mitotic Golgi disassembly, ubiquitination serving as a signal for Golgi reassembly later, after cell division. Specifically binds GTP-bound RAC1, mediating ubiquitination and subsequent degradation of active RAC1, thereby playing a role in host defense against pathogens. May also act as a transcription regulator via its interaction with RARB. This Bos taurus (Bovine) protein is E3 ubiquitin-protein ligase HACE1 (HACE1).